The chain runs to 341 residues: Phenylalanine--tRNA ligase alpha subunit (341 aa).

Glutamate 256 provides a ligand contact to Mg(2+).

The protein belongs to the class-II aminoacyl-tRNA synthetase family. Phe-tRNA synthetase alpha subunit type 1 subfamily. As to quaternary structure, tetramer of two alpha and two beta subunits. Requires Mg(2+) as cofactor.

It is found in the cytoplasm. The enzyme catalyses tRNA(Phe) + L-phenylalanine + ATP = L-phenylalanyl-tRNA(Phe) + AMP + diphosphate + H(+). This is Phenylalanine--tRNA ligase alpha subunit from Chlamydia caviae (strain ATCC VR-813 / DSM 19441 / 03DC25 / GPIC) (Chlamydophila caviae).